Here is a 149-residue protein sequence, read N- to C-terminus: 3-hydroxyacyl-[acyl-carrier-protein] dehydratase FabZ (149 aa).

Residue His53 is part of the active site.

The protein belongs to the thioester dehydratase family. FabZ subfamily.

The protein localises to the cytoplasm. It carries out the reaction a (3R)-hydroxyacyl-[ACP] = a (2E)-enoyl-[ACP] + H2O. Its function is as follows. Involved in unsaturated fatty acids biosynthesis. Catalyzes the dehydration of short chain beta-hydroxyacyl-ACPs and long chain saturated and unsaturated beta-hydroxyacyl-ACPs. In Neisseria meningitidis serogroup B (strain ATCC BAA-335 / MC58), this protein is 3-hydroxyacyl-[acyl-carrier-protein] dehydratase FabZ.